A 684-amino-acid chain; its full sequence is uncharacterized protein (684 aa).

2 disordered regions span residues 267 to 353 and 388 to 449; these read MGAR…TCTD and SVAS…AERE. Residues 316-326 show a composition bias toward polar residues; that stretch reads GMTSAKASTSY. Positions 438-449 are enriched in basic and acidic residues; the sequence is RPTEARRRAERE.

This is an uncharacterized protein from Colorado tick fever virus (strain USA/Florio N-7180) (CTFV).